The following is a 473-amino-acid chain: MASCVGSRTLSKDDVNYRMHFRMINEQQVEDITIDFFYRPHTITLLSFTIISLMYFAFTRDDCVPEDNIWRGILSVIFFFLIISVLAFPNGPFTRPHPALWRMVFGLSVLYFLFLVFLLFLNFEQVKSLMYWLDPNLRYATREADIMEYAVNCHVITWERIVSHFDIFAFGHFWGWAMKALLIRSYGLCWTISITWELTELFFMHLLPNFAECWWDQVILDILLCNGGGIWLGMVVCRFLEMRTYHWASFKDIHTTTGKIKRAVLQFTPASWTYVRWFDPKSSFQRVAGIYLFMIIWQLTELNTFFLKHIFVFQASHPLSWCRILFIGCITAPTVRQYYAYLTDTQCKRVGTQCWVFGVIGFLEAIVCIKFGQDLFSKTQILYVVLWLLCVAFTTFLCLYGMVWYAEHYGHREKTYSECEDGTYSPEISWYHGKGSKGSEDSPPKHSNNNESHSSRRRNRHSKSKVTNGVGKK.

Ala2 carries the post-translational modification N-acetylalanine. The Cytoplasmic portion of the chain corresponds to 2-35 (ASCVGSRTLSKDDVNYRMHFRMINEQQVEDITID). The helical transmembrane segment at 36–56 (FFYRPHTITLLSFTIISLMYF) threads the bilayer. The Lumenal portion of the chain corresponds to 57 to 72 (AFTRDDCVPEDNIWRG). The helical transmembrane segment at 73-93 (ILSVIFFFLIISVLAFPNGPF) threads the bilayer. The Cytoplasmic portion of the chain corresponds to 94–102 (TRPHPALWR). A helical transmembrane segment spans residues 103–123 (MVFGLSVLYFLFLVFLLFLNF). Residues 124-186 (EQVKSLMYWL…AMKALLIRSY (63 aa)) lie on the Lumenal side of the membrane. Residues 187-207 (GLCWTISITWELTELFFMHLL) traverse the membrane as a helical segment. Over 208–216 (PNFAECWWD) the chain is Cytoplasmic. The helical transmembrane segment at 217–237 (QVILDILLCNGGGIWLGMVVC) threads the bilayer. Residues 238–286 (RFLEMRTYHWASFKDIHTTTGKIKRAVLQFTPASWTYVRWFDPKSSFQR) are Lumenal-facing. The chain crosses the membrane as a helical span at residues 287–307 (VAGIYLFMIIWQLTELNTFFL). The Cytoplasmic segment spans residues 308–319 (KHIFVFQASHPL). Residues 320 to 342 (SWCRILFIGCITAPTVRQYYAYL) traverse the membrane as a helical segment. Over 343 to 355 (TDTQCKRVGTQCW) the chain is Lumenal. The chain crosses the membrane as a helical span at residues 356–376 (VFGVIGFLEAIVCIKFGQDLF). Residues 377–383 (SKTQILY) are Cytoplasmic-facing. Residues 384–404 (VVLWLLCVAFTTFLCLYGMVW) form a helical membrane-spanning segment. Over 405–473 (YAEHYGHREK…SKVTNGVGKK (69 aa)) the chain is Lumenal. Residues Ser417, Ser425, Ser442, and Ser454 each carry the phosphoserine modification. Residues 430-473 (WYHGKGSKGSEDSPPKHSNNNESHSSRRRNRHSKSKVTNGVGKK) form a disordered region. Residues 455 to 464 (SRRRNRHSKS) show a composition bias toward basic residues.

Belongs to the phosphatidyl serine synthase family.

It localises to the endoplasmic reticulum membrane. The catalysed reaction is a 1,2-diacyl-sn-glycero-3-phosphoethanolamine + L-serine = a 1,2-diacyl-sn-glycero-3-phospho-L-serine + ethanolamine. The enzyme catalyses a 1,2-diacyl-sn-glycero-3-phosphocholine + L-serine = a 1,2-diacyl-sn-glycero-3-phospho-L-serine + choline. Its pathway is phospholipid metabolism; phosphatidylserine biosynthesis. Catalyzes a base-exchange reaction in which the polar head group of phosphatidylethanolamine (PE) or phosphatidylcholine (PC) is replaced by L-serine. Catalyzes mainly the conversion of phosphatidylcholine but also converts, in vitro and to a lesser extent, phosphatidylethanolamine. This Rattus norvegicus (Rat) protein is Phosphatidylserine synthase 1 (Ptdss1).